A 376-amino-acid chain; its full sequence is Queuine tRNA-ribosyltransferase (376 aa).

The Proton acceptor role is filled by Asp-93. Residues 93-97, Asp-147, Gln-190, and Gly-217 contribute to the substrate site; that span reads DSGGF. The RNA binding stretch occupies residues 248-254; the sequence is GVGKPDD. The active-site Nucleophile is the Asp-267. Residues Cys-305, Cys-307, Cys-310, and His-336 each contribute to the Zn(2+) site.

Belongs to the queuine tRNA-ribosyltransferase family. As to quaternary structure, homodimer. Within each dimer, one monomer is responsible for RNA recognition and catalysis, while the other monomer binds to the replacement base PreQ1. Requires Zn(2+) as cofactor.

It catalyses the reaction 7-aminomethyl-7-carbaguanine + guanosine(34) in tRNA = 7-aminomethyl-7-carbaguanosine(34) in tRNA + guanine. It participates in tRNA modification; tRNA-queuosine biosynthesis. Catalyzes the base-exchange of a guanine (G) residue with the queuine precursor 7-aminomethyl-7-deazaguanine (PreQ1) at position 34 (anticodon wobble position) in tRNAs with GU(N) anticodons (tRNA-Asp, -Asn, -His and -Tyr). Catalysis occurs through a double-displacement mechanism. The nucleophile active site attacks the C1' of nucleotide 34 to detach the guanine base from the RNA, forming a covalent enzyme-RNA intermediate. The proton acceptor active site deprotonates the incoming PreQ1, allowing a nucleophilic attack on the C1' of the ribose to form the product. After dissociation, two additional enzymatic reactions on the tRNA convert PreQ1 to queuine (Q), resulting in the hypermodified nucleoside queuosine (7-(((4,5-cis-dihydroxy-2-cyclopenten-1-yl)amino)methyl)-7-deazaguanosine). This is Queuine tRNA-ribosyltransferase from Ruegeria pomeroyi (strain ATCC 700808 / DSM 15171 / DSS-3) (Silicibacter pomeroyi).